A 365-amino-acid polypeptide reads, in one-letter code: Ubiquitin carboxyl-terminal hydrolase 4 (365 aa).

Gly-2 carries N-myristoyl glycine lipidation. In terms of domain architecture, USP spans 23-362 (FGFENFGNTC…HGYILLYESL (340 aa)). Cys-32 (nucleophile) is an active-site residue. Positions 81–98 (KKKTGVIAPKRFVQRLKK) match the Bipartite nuclear localization signal motif. Catalysis depends on His-310, which acts as the Proton acceptor.

The protein belongs to the peptidase C19 family. In terms of tissue distribution, constitutively and ubiquitously expressed.

It is found in the nucleus. It catalyses the reaction Thiol-dependent hydrolysis of ester, thioester, amide, peptide and isopeptide bonds formed by the C-terminal Gly of ubiquitin (a 76-residue protein attached to proteins as an intracellular targeting signal).. Functionally, recognizes and hydrolyzes the peptide bond at the C-terminal Gly of ubiquitin. Involved in the processing of poly-ubiquitin precursors as well as that of ubiquitinated proteins. Required for the correct development of pollen. This is Ubiquitin carboxyl-terminal hydrolase 4 (UBP4) from Arabidopsis thaliana (Mouse-ear cress).